The following is a 117-amino-acid chain: Probable non-functional immunoglobulinn kappa variable 1-37 (117 aa).

Positions 1 to 22 (MDMRVPAQLLGLLLLWVPGARC) are cleaved as a signal peptide. Residues 24 to 117 (IQLTQSPSSL…YYGQRTYNAP (94 aa)) enclose the Ig-like domain.

Most probably, the immunoglobulin is not assembled due to incorrect folding of light chain. Immunoglobulins are composed of two identical heavy chains and two identical light chains; disulfide-linked.

It localises to the secreted. Its subcellular location is the cell membrane. Its function is as follows. Probable non-functional open reading frame (ORF) of V region of the variable domain of immunoglobulin light chains. Non-functional ORF generally cannot participate in the synthesis of a productive immunoglobulin chain due to altered V-(D)-J or switch recombination and/or splicing site (at mRNA level) and/or conserved amino acid change (protein level). Immunoglobulins, also known as antibodies, are membrane-bound or secreted glycoproteins produced by B lymphocytes. In the recognition phase of humoral immunity, the membrane-bound immunoglobulins serve as receptors which, upon binding of a specific antigen, trigger the clonal expansion and differentiation of B lymphocytes into immunoglobulins-secreting plasma cells. Secreted immunoglobulins mediate the effector phase of humoral immunity, which results in the elimination of bound antigens. The antigen binding site is formed by the variable domain of one heavy chain, together with that of its associated light chain. Thus, each immunoglobulin has two antigen binding sites with remarkable affinity for a particular antigen. The variable domains are assembled by a process called V-(D)-J rearrangement and can then be subjected to somatic hypermutations which, after exposure to antigen and selection, allow affinity maturation for a particular antigen. This Homo sapiens (Human) protein is Probable non-functional immunoglobulinn kappa variable 1-37.